The chain runs to 432 residues: 2-oxoglutarate-dependent dioxygenase AOP2 (432 aa).

The region spanning 281–378 (SGDDVEANDD…RYTAAIFTCP (98 aa)) is the Fe2OG dioxygenase domain. The Fe cation site is built by H301, D303, and H358. R369 is a binding site for 2-oxoglutarate.

Belongs to the iron/ascorbate-dependent oxidoreductase family. Fe(2+) serves as cofactor.

Its function is as follows. 2-oxoglutarate-dependent dioxygenase involved in glucosinolates biosynthesis. Catalyzes the conversion of methylsulfinylalkyl glucosinolates to alkenyl glucosinolates. The sequence is that of 2-oxoglutarate-dependent dioxygenase AOP2 (AOP2) from Arabidopsis thaliana (Mouse-ear cress).